The sequence spans 556 residues: mRNA-capping enzyme subunit beta (556 aa).

Disordered stretches follow at residues 1–28 and 56–217; these read MKPS…DNNV and LPPV…QKTS. Positions 63–74 are enriched in polar residues; the sequence is VSTSDTGNTSHT. A compositionally biased stretch (acidic residues) spans 85–96; the sequence is ESDETDTDDEPG. Basic and acidic residues-rich tracts occupy residues 103 to 131 and 139 to 212; these read TKFR…KDKQ and IQLD…KDIF.

It belongs to the fungal TPase family. Heterodimer. The mRNA-capping enzyme is composed of two separate chains alpha and beta, respectively a mRNA guanylyltransferase and an mRNA 5'-triphosphate monophosphatase. It depends on Mg(2+) as a cofactor.

It localises to the nucleus. It catalyses the reaction a 5'-end triphospho-ribonucleoside in mRNA + H2O = a 5'-end diphospho-ribonucleoside in mRNA + phosphate + H(+). In terms of biological role, first step of mRNA capping. Converts the 5'-triphosphate end of a nascent mRNA chain into a diphosphate end. The chain is mRNA-capping enzyme subunit beta (CET1) from Kluyveromyces lactis (strain ATCC 8585 / CBS 2359 / DSM 70799 / NBRC 1267 / NRRL Y-1140 / WM37) (Yeast).